A 190-amino-acid chain; its full sequence is Peptidyl-prolyl cis-trans isomerase A (190 aa).

The signal sequence occupies residues 1 to 24; it reads MFKSTLAAMAAVFALSALSPAAMA. The PPIase cyclophilin-type domain occupies 27–188; that stretch reads GDPHVLLTTS…KPVVILSAKV (162 aa).

The protein belongs to the cyclophilin-type PPIase family.

It localises to the periplasm. The enzyme catalyses [protein]-peptidylproline (omega=180) = [protein]-peptidylproline (omega=0). In terms of biological role, PPIases accelerate the folding of proteins. It catalyzes the cis-trans isomerization of proline imidic peptide bonds in oligopeptides. This Escherichia coli O157:H7 protein is Peptidyl-prolyl cis-trans isomerase A (ppiA).